Reading from the N-terminus, the 427-residue chain is Histidinol dehydrogenase (427 aa).

Positions 232, 254, and 257 each coordinate substrate. 2 residues coordinate Zn(2+): glutamine 254 and histidine 257. Active-site proton acceptor residues include glutamate 322 and histidine 323. Substrate-binding residues include histidine 323, aspartate 356, glutamate 410, and histidine 415. Aspartate 356 contributes to the Zn(2+) binding site. Histidine 415 contacts Zn(2+).

It belongs to the histidinol dehydrogenase family. Zn(2+) serves as cofactor.

It catalyses the reaction L-histidinol + 2 NAD(+) + H2O = L-histidine + 2 NADH + 3 H(+). It participates in amino-acid biosynthesis; L-histidine biosynthesis; L-histidine from 5-phospho-alpha-D-ribose 1-diphosphate: step 9/9. In terms of biological role, catalyzes the sequential NAD-dependent oxidations of L-histidinol to L-histidinaldehyde and then to L-histidine. The sequence is that of Histidinol dehydrogenase from Listeria innocua serovar 6a (strain ATCC BAA-680 / CLIP 11262).